The chain runs to 362 residues: Hydroxycarboxylate dehydrogenase A (362 aa).

Residues Asp173, His257, and His274 each contribute to the Zn(2+) site.

The protein belongs to the iron-containing alcohol dehydrogenase family. Zn(2+) is required as a cofactor.

It carries out the reaction 2-hydroxybutanoate + NADP(+) = 2-oxobutanoate + NADPH + H(+). The catalysed reaction is 2-hydroxyglutarate + NADP(+) = 2-oxoglutarate + NADPH + H(+). Functionally, catalyzes the NADPH-dependent reduction of 2-oxoglutarate and 2-oxobutanoate, leading to the respective 2-hydroxycarboxylate. Cannot use NADH instead of NADPH as a redox partner. Do not catalyze the reverse reactions. The sequence is that of Hydroxycarboxylate dehydrogenase A from Escherichia coli (strain K12).